The primary structure comprises 28 residues: Alpha-(1-6)-linked fucose-specific lectin (28 aa).

As to quaternary structure, homohexamer. In terms of tissue distribution, expressed by mycelium-forming spores.

The protein localises to the secreted. Functionally, alpha-(1-6)-linked L-fucose specific lectin. This is Alpha-(1-6)-linked fucose-specific lectin from Rhizopus stolonifer (Rhizopus nigricans).